The following is a 462-amino-acid chain: Toxin CqTX-A (462 aa).

Residues 1-19 (MANMLYFSLLALLFMTGIA) form the signal peptide. The N-linked (GlcNAc...) asparagine glycan is linked to asparagine 174.

It belongs to the jellyfish toxin family. Type I subfamily. In terms of processing, contains disulfide bonds. Post-translationally, N-glycosylated.

It localises to the secreted. The protein localises to the nematocyst. Its subcellular location is the target cell membrane. In terms of biological role, critical allergen and main toxic protein of C.quadrigatus venom. Has potent hemolytic activity. Is lethal to crayfish. Causes cutaneous inflammation in humans. May act as a pore-forming toxin, disrupting normal transmembrane ion concentration gradients in susceptible cells. The sequence is that of Toxin CqTX-A from Chiropsoides quadrigatus (Box jellyfish).